A 456-amino-acid polypeptide reads, in one-letter code: Bifunctional protein GlmU (456 aa).

Positions 1–231 (MERTCLAIIL…EEELTGCNTR (231 aa)) are pyrophosphorylase. Residues 10-13 (LAAG), Lys-24, Gln-77, and 82-83 (GT) contribute to the UDP-N-acetyl-alpha-D-glucosamine site. Position 107 (Asp-107) interacts with Mg(2+). Positions 143, 157, 172, and 229 each coordinate UDP-N-acetyl-alpha-D-glucosamine. Residue Asn-229 coordinates Mg(2+). Residues 232 to 252 (AELAYIERLWQQRRRHELMLA) form a linker region. An N-acetyltransferase region spans residues 253 to 456 (GVSMVAPETV…LARKIAKAAE (204 aa)). UDP-N-acetyl-alpha-D-glucosamine-binding residues include Arg-318 and Lys-336. His-348 acts as the Proton acceptor in catalysis. Tyr-351 and Asn-362 together coordinate UDP-N-acetyl-alpha-D-glucosamine. Acetyl-CoA-binding positions include Ala-365, 371–372 (NY), Ser-390, Ser-408, and Arg-425.

It in the N-terminal section; belongs to the N-acetylglucosamine-1-phosphate uridyltransferase family. This sequence in the C-terminal section; belongs to the transferase hexapeptide repeat family. Homotrimer. Mg(2+) is required as a cofactor.

Its subcellular location is the cytoplasm. It carries out the reaction alpha-D-glucosamine 1-phosphate + acetyl-CoA = N-acetyl-alpha-D-glucosamine 1-phosphate + CoA + H(+). The catalysed reaction is N-acetyl-alpha-D-glucosamine 1-phosphate + UTP + H(+) = UDP-N-acetyl-alpha-D-glucosamine + diphosphate. It functions in the pathway nucleotide-sugar biosynthesis; UDP-N-acetyl-alpha-D-glucosamine biosynthesis; N-acetyl-alpha-D-glucosamine 1-phosphate from alpha-D-glucosamine 6-phosphate (route II): step 2/2. It participates in nucleotide-sugar biosynthesis; UDP-N-acetyl-alpha-D-glucosamine biosynthesis; UDP-N-acetyl-alpha-D-glucosamine from N-acetyl-alpha-D-glucosamine 1-phosphate: step 1/1. The protein operates within bacterial outer membrane biogenesis; LPS lipid A biosynthesis. Functionally, catalyzes the last two sequential reactions in the de novo biosynthetic pathway for UDP-N-acetylglucosamine (UDP-GlcNAc). The C-terminal domain catalyzes the transfer of acetyl group from acetyl coenzyme A to glucosamine-1-phosphate (GlcN-1-P) to produce N-acetylglucosamine-1-phosphate (GlcNAc-1-P), which is converted into UDP-GlcNAc by the transfer of uridine 5-monophosphate (from uridine 5-triphosphate), a reaction catalyzed by the N-terminal domain. The polypeptide is Bifunctional protein GlmU (Sinorhizobium medicae (strain WSM419) (Ensifer medicae)).